A 76-amino-acid polypeptide reads, in one-letter code: Translation initiation factor IF-1 (76 aa).

One can recognise an S1-like domain in the interval 1-72 (MAKKDVVVMQ…NKGRIVKREK (72 aa)).

The protein belongs to the IF-1 family. In terms of assembly, component of the 30S ribosomal translation pre-initiation complex which assembles on the 30S ribosome in the order IF-2 and IF-3, IF-1 and N-formylmethionyl-tRNA(fMet); mRNA recruitment can occur at any time during PIC assembly.

The protein localises to the cytoplasm. In terms of biological role, one of the essential components for the initiation of protein synthesis. Stabilizes the binding of IF-2 and IF-3 on the 30S subunit to which N-formylmethionyl-tRNA(fMet) subsequently binds. Helps modulate mRNA selection, yielding the 30S pre-initiation complex (PIC). Upon addition of the 50S ribosomal subunit IF-1, IF-2 and IF-3 are released leaving the mature 70S translation initiation complex. The protein is Translation initiation factor IF-1 of Petrotoga mobilis (strain DSM 10674 / SJ95).